Here is a 73-residue protein sequence, read N- to C-terminus: uncharacterized protein (73 aa).

A helical transmembrane segment spans residues 37-57; sequence AIIITVAVVAFGALTLGAIGA.

The protein resides in the membrane. This is an uncharacterized protein from Natronomonas pharaonis (strain ATCC 35678 / DSM 2160 / CIP 103997 / JCM 8858 / NBRC 14720 / NCIMB 2260 / Gabara) (Halobacterium pharaonis).